Reading from the N-terminus, the 480-residue chain is Protein nucleotidyltransferase YdiU (480 aa).

Glycine 86, glycine 88, arginine 89, lysine 109, aspartate 121, glycine 122, arginine 172, and arginine 179 together coordinate ATP. Residue aspartate 248 is the Proton acceptor of the active site. Residues asparagine 249 and aspartate 258 each contribute to the Mg(2+) site. Aspartate 258 is an ATP binding site.

It belongs to the SELO family. The cofactor is Mg(2+). Mn(2+) serves as cofactor.

It carries out the reaction L-seryl-[protein] + ATP = 3-O-(5'-adenylyl)-L-seryl-[protein] + diphosphate. The enzyme catalyses L-threonyl-[protein] + ATP = 3-O-(5'-adenylyl)-L-threonyl-[protein] + diphosphate. It catalyses the reaction L-tyrosyl-[protein] + ATP = O-(5'-adenylyl)-L-tyrosyl-[protein] + diphosphate. The catalysed reaction is L-histidyl-[protein] + UTP = N(tele)-(5'-uridylyl)-L-histidyl-[protein] + diphosphate. It carries out the reaction L-seryl-[protein] + UTP = O-(5'-uridylyl)-L-seryl-[protein] + diphosphate. The enzyme catalyses L-tyrosyl-[protein] + UTP = O-(5'-uridylyl)-L-tyrosyl-[protein] + diphosphate. Functionally, nucleotidyltransferase involved in the post-translational modification of proteins. It can catalyze the addition of adenosine monophosphate (AMP) or uridine monophosphate (UMP) to a protein, resulting in modifications known as AMPylation and UMPylation. The polypeptide is Protein nucleotidyltransferase YdiU (Salmonella enteritidis PT4 (strain P125109)).